The sequence spans 243 residues: 2-C-methyl-D-erythritol 4-phosphate cytidylyltransferase (243 aa).

It belongs to the IspD/TarI cytidylyltransferase family. IspD subfamily.

The enzyme catalyses 2-C-methyl-D-erythritol 4-phosphate + CTP + H(+) = 4-CDP-2-C-methyl-D-erythritol + diphosphate. It participates in isoprenoid biosynthesis; isopentenyl diphosphate biosynthesis via DXP pathway; isopentenyl diphosphate from 1-deoxy-D-xylulose 5-phosphate: step 2/6. Functionally, catalyzes the formation of 4-diphosphocytidyl-2-C-methyl-D-erythritol from CTP and 2-C-methyl-D-erythritol 4-phosphate (MEP). This chain is 2-C-methyl-D-erythritol 4-phosphate cytidylyltransferase, found in Aeromonas hydrophila subsp. hydrophila (strain ATCC 7966 / DSM 30187 / BCRC 13018 / CCUG 14551 / JCM 1027 / KCTC 2358 / NCIMB 9240 / NCTC 8049).